The following is a 225-amino-acid chain: Protein-L-isoaspartate O-methyltransferase (225 aa).

The active site involves Ser75.

The protein belongs to the methyltransferase superfamily. L-isoaspartyl/D-aspartyl protein methyltransferase family.

The protein resides in the cytoplasm. It carries out the reaction [protein]-L-isoaspartate + S-adenosyl-L-methionine = [protein]-L-isoaspartate alpha-methyl ester + S-adenosyl-L-homocysteine. Its function is as follows. Catalyzes the methyl esterification of L-isoaspartyl residues in peptides and proteins that result from spontaneous decomposition of normal L-aspartyl and L-asparaginyl residues. It plays a role in the repair and/or degradation of damaged proteins. This is Protein-L-isoaspartate O-methyltransferase from Xanthomonas euvesicatoria pv. vesicatoria (strain 85-10) (Xanthomonas campestris pv. vesicatoria).